The sequence spans 281 residues: Phosphatidylglycerol--prolipoprotein diacylglyceryl transferase (281 aa).

3 helical membrane-spanning segments follow: residues 11 to 31 (IIFTIGPVSARWYGFMYVISF), 57 to 77 (LLYSIFLGSCIGGRIGYIIFY), and 89 to 109 (VFYIWEGGMSFHGGLIGAIIV). R140 lines the a 1,2-diacyl-sn-glycero-3-phospho-(1'-sn-glycerol) pocket. The next 3 helical transmembrane spans lie at 194-214 (PTQLYEFFLEGILLFFIIYFF), 222-242 (GSISGLFLIFYGLFRIFIEFF), and 255-275 (IITMGQILSLPMIIAGLIIMY).

Belongs to the Lgt family.

The protein resides in the cell inner membrane. It carries out the reaction L-cysteinyl-[prolipoprotein] + a 1,2-diacyl-sn-glycero-3-phospho-(1'-sn-glycerol) = an S-1,2-diacyl-sn-glyceryl-L-cysteinyl-[prolipoprotein] + sn-glycerol 1-phosphate + H(+). It functions in the pathway protein modification; lipoprotein biosynthesis (diacylglyceryl transfer). Functionally, catalyzes the transfer of the diacylglyceryl group from phosphatidylglycerol to the sulfhydryl group of the N-terminal cysteine of a prolipoprotein, the first step in the formation of mature lipoproteins. The polypeptide is Phosphatidylglycerol--prolipoprotein diacylglyceryl transferase (Buchnera aphidicola subsp. Acyrthosiphon pisum (strain APS) (Acyrthosiphon pisum symbiotic bacterium)).